A 242-amino-acid chain; its full sequence is ATP-dependent dethiobiotin synthetase BioD (242 aa).

Residue 12-17 coordinates ATP; that stretch reads EVGKTV. Thr-16 is a binding site for Mg(2+). The active site involves Lys-37. Ser-41 lines the substrate pocket. Residues Asp-51 and 112–115 contribute to the ATP site; that span reads EGAG. Residues Asp-51 and Glu-112 each coordinate Mg(2+).

This sequence belongs to the dethiobiotin synthetase family. In terms of assembly, homodimer. It depends on Mg(2+) as a cofactor.

Its subcellular location is the cytoplasm. It catalyses the reaction (7R,8S)-7,8-diammoniononanoate + CO2 + ATP = (4R,5S)-dethiobiotin + ADP + phosphate + 3 H(+). It functions in the pathway cofactor biosynthesis; biotin biosynthesis; biotin from 7,8-diaminononanoate: step 1/2. In terms of biological role, catalyzes a mechanistically unusual reaction, the ATP-dependent insertion of CO2 between the N7 and N8 nitrogen atoms of 7,8-diaminopelargonic acid (DAPA, also called 7,8-diammoniononanoate) to form a ureido ring. The sequence is that of ATP-dependent dethiobiotin synthetase BioD from Bacillus thuringiensis (strain Al Hakam).